The sequence spans 438 residues: MRISIFGLGYVGAVCAGCLSARGHDVVGVDISSTKIDLINNGKSPIVEPGLEELLQKGLATGKLRGTTDFAEAIRATDLSMICVGTPSKKNGDLELDYIESVCREIGYVLRDKNTRHTIVVRSTVLPGTVANVVIPILEDCSGKKAGVDFGVAVNPEFLRESTAIKDYDLPPMTVIGEFDKASGDVLQSLYEELDAPIIRKDIAVAEMIKYTCNVWHATKVTFANEIGNIAKAVGVDGREVMDVVCQDKALNLSQYYMRPGFAFGGSCLPKDVRALTYRAGSLDVDAPLLNSLMRSNTSQVQNAFDMVASYDTRKVALLGLSFKAGTDDLRESPLVELAEMLIGKGFDLSIFDSNVEYARVHGANKDYIESKIPHVSSLLNSDFDQVINDSDVIILGNRDERFRSLANKTPEGKRVIDLVGFMTNATTEDGRAEGICW.

The NAD(+) site is built by Tyr10, Val11, Asp30, Lys35, Thr86, and Thr124. Glu161, Lys210, Asn214, His217, Asn225, Tyr256, Tyr257, Arg259, Phe262, and Gly265 together coordinate GDP-alpha-D-mannuronate. The active site involves Cys268. Lys271 serves as a coordination point for NAD(+). Lys324 is a binding site for GDP-alpha-D-mannuronate. Residue Arg331 coordinates NAD(+).

The protein belongs to the UDP-glucose/GDP-mannose dehydrogenase family.

It catalyses the reaction GDP-alpha-D-mannose + 2 NAD(+) + H2O = GDP-alpha-D-mannuronate + 2 NADH + 3 H(+). Its pathway is glycan biosynthesis; alginate biosynthesis. Catalyzes the oxidation of guanosine diphospho-D-mannose (GDP-D-mannose) to GDP-D-mannuronic acid, a precursor for alginate polymerization. The alginate layer causes a mucoid phenotype and provides a protective barrier against host immune defenses and antibiotics. This Pseudomonas syringae pv. tomato (strain ATCC BAA-871 / DC3000) protein is GDP-mannose 6-dehydrogenase (algD).